Reading from the N-terminus, the 191-residue chain is UPF0149 protein VV1_1551 (191 aa).

The protein belongs to the UPF0149 family.

This chain is UPF0149 protein VV1_1551, found in Vibrio vulnificus (strain CMCP6).